Here is a 113-residue protein sequence, read N- to C-terminus: MSASVVSVISRFLEEYLSSTPQRLKLLDAYLLYILLTGALQFGYCLLVGTFPFNSFLSGFISCVGSFILAVRLRIQINPQNKADFQGISPERAFADFLFASTILHLVVMNFVG.

An N-acetylserine modification is found at S2. The Cytoplasmic portion of the chain corresponds to 2 to 30 (SASVVSVISRFLEEYLSSTPQRLKLLDAY). Residues 31–51 (LLYILLTGALQFGYCLLVGTF) traverse the membrane as a helical segment. P52 is a topological domain (lumenal). A helical membrane pass occupies residues 53-73 (FNSFLSGFISCVGSFILAVRL). Over 74 to 92 (RIQINPQNKADFQGISPER) the chain is Cytoplasmic. Residues 93-113 (AFADFLFASTILHLVVMNFVG) form a helical membrane-spanning segment.

Belongs to the DAD/OST2 family. In terms of assembly, component of the oligosaccharyltransferase (OST) complex. OST exists in two different complex forms which contain common core subunits RPN1, RPN2, OST48, OST4, DAD1 and TMEM258, either STT3A or STT3B as catalytic subunits, and form-specific accessory subunits. STT3A complex assembly occurs through the formation of 3 subcomplexes. Subcomplex 1 contains RPN1 and TMEM258, subcomplex 2 contains the STT3A-specific subunits STT3A, DC2/OSTC, and KCP2 as well as the core subunit OST4, and subcomplex 3 contains RPN2, DAD1, and OST48. The STT3A complex can form stable complexes with the Sec61 complex or with both the Sec61 and TRAP complexes.

Its subcellular location is the endoplasmic reticulum membrane. The protein operates within protein modification; protein glycosylation. Functionally, subunit of the oligosaccharyl transferase (OST) complex that catalyzes the initial transfer of a defined glycan (Glc(3)Man(9)GlcNAc(2) in eukaryotes) from the lipid carrier dolichol-pyrophosphate to an asparagine residue within an Asn-X-Ser/Thr consensus motif in nascent polypeptide chains, the first step in protein N-glycosylation. N-glycosylation occurs cotranslationally and the complex associates with the Sec61 complex at the channel-forming translocon complex that mediates protein translocation across the endoplasmic reticulum (ER). All subunits are required for a maximal enzyme activity. The sequence is that of Dolichyl-diphosphooligosaccharide--protein glycosyltransferase subunit DAD1 from Pongo abelii (Sumatran orangutan).